Here is a 25-residue protein sequence, read N- to C-terminus: MRAKWRKKRVRRLKRKRRKTRARSK.

The disordered stretch occupies residues 1–25; sequence MRAKWRKKRVRRLKRKRRKTRARSK.

This sequence belongs to the eukaryotic ribosomal protein eS32 family. In terms of assembly, component of the small ribosomal subunit.

This chain is Small ribosomal subunit protein eS32 (RPL41), found in Quercus suber (Cork oak).